A 184-amino-acid polypeptide reads, in one-letter code: Elongation factor P (184 aa).

This sequence belongs to the elongation factor P family.

It is found in the cytoplasm. It participates in protein biosynthesis; polypeptide chain elongation. Functionally, involved in peptide bond synthesis. Stimulates efficient translation and peptide-bond synthesis on native or reconstituted 70S ribosomes in vitro. Probably functions indirectly by altering the affinity of the ribosome for aminoacyl-tRNA, thus increasing their reactivity as acceptors for peptidyl transferase. The chain is Elongation factor P from Acidovorax ebreus (strain TPSY) (Diaphorobacter sp. (strain TPSY)).